We begin with the raw amino-acid sequence, 58 residues long: Ribosome biogenesis protein Nop10 (58 aa).

The protein belongs to the NOP10 family.

Its function is as follows. Involved in ribosome biogenesis; more specifically in 18S rRNA pseudouridylation and in cleavage of pre-rRNA. In Methanobrevibacter smithii (strain ATCC 35061 / DSM 861 / OCM 144 / PS), this protein is Ribosome biogenesis protein Nop10.